Here is a 213-residue protein sequence, read N- to C-terminus: Orotate phosphoribosyltransferase (213 aa).

Residue Lys-26 coordinates 5-phospho-alpha-D-ribose 1-diphosphate. 34-35 (FF) is a binding site for orotate. Residues 72 to 73 (YK), Arg-99, Lys-100, Lys-103, His-105, and 124 to 132 (DDVITAGTA) each bind 5-phospho-alpha-D-ribose 1-diphosphate. Orotate is bound by residues Thr-128 and Arg-156.

It belongs to the purine/pyrimidine phosphoribosyltransferase family. PyrE subfamily. In terms of assembly, homodimer. Mg(2+) is required as a cofactor.

The catalysed reaction is orotidine 5'-phosphate + diphosphate = orotate + 5-phospho-alpha-D-ribose 1-diphosphate. Its pathway is pyrimidine metabolism; UMP biosynthesis via de novo pathway; UMP from orotate: step 1/2. Functionally, catalyzes the transfer of a ribosyl phosphate group from 5-phosphoribose 1-diphosphate to orotate, leading to the formation of orotidine monophosphate (OMP). The polypeptide is Orotate phosphoribosyltransferase (Shigella dysenteriae serotype 1 (strain Sd197)).